A 660-amino-acid polypeptide reads, in one-letter code: Bifunctional polymyxin resistance protein ArnA (660 aa).

Residues 1–304 form a formyltransferase ArnAFT region; it reads MKAVIFAYHD…TLGLVAGARL (304 aa). The active-site Proton donor; for formyltransferase activity is the H104. (6R)-10-formyltetrahydrofolate is bound by residues R114 and 136–140; that span reads VKRAD. The segment at 314–660 is dehydrogenase ArnADH; sequence RRIRVLILGV…RSVDVAERAS (347 aa). Residues D347 and 368–369 contribute to the NAD(+) site; that span reads DI. UDP-alpha-D-glucuronate contacts are provided by residues A393, Y398, and 432-433; that span reads TS. E434 (proton acceptor; for decarboxylase activity) is an active-site residue. UDP-alpha-D-glucuronate contacts are provided by residues R460, N492, 526–535, and Y613; that span reads KLIDGGQQKR. R619 acts as the Proton donor; for decarboxylase activity in catalysis.

This sequence in the N-terminal section; belongs to the Fmt family. UDP-L-Ara4N formyltransferase subfamily. The protein in the C-terminal section; belongs to the NAD(P)-dependent epimerase/dehydratase family. UDP-glucuronic acid decarboxylase subfamily. In terms of assembly, homohexamer, formed by a dimer of trimers.

The catalysed reaction is UDP-alpha-D-glucuronate + NAD(+) = UDP-beta-L-threo-pentopyranos-4-ulose + CO2 + NADH. The enzyme catalyses UDP-4-amino-4-deoxy-beta-L-arabinose + (6R)-10-formyltetrahydrofolate = UDP-4-deoxy-4-formamido-beta-L-arabinose + (6S)-5,6,7,8-tetrahydrofolate + H(+). It functions in the pathway nucleotide-sugar biosynthesis; UDP-4-deoxy-4-formamido-beta-L-arabinose biosynthesis; UDP-4-deoxy-4-formamido-beta-L-arabinose from UDP-alpha-D-glucuronate: step 1/3. Its pathway is nucleotide-sugar biosynthesis; UDP-4-deoxy-4-formamido-beta-L-arabinose biosynthesis; UDP-4-deoxy-4-formamido-beta-L-arabinose from UDP-alpha-D-glucuronate: step 3/3. It participates in bacterial outer membrane biogenesis; lipopolysaccharide biosynthesis. Its function is as follows. Bifunctional enzyme that catalyzes the oxidative decarboxylation of UDP-glucuronic acid (UDP-GlcUA) to UDP-4-keto-arabinose (UDP-Ara4O) and the addition of a formyl group to UDP-4-amino-4-deoxy-L-arabinose (UDP-L-Ara4N) to form UDP-L-4-formamido-arabinose (UDP-L-Ara4FN). The modified arabinose is attached to lipid A and is required for resistance to polymyxin and cationic antimicrobial peptides. The sequence is that of Bifunctional polymyxin resistance protein ArnA from Salmonella paratyphi C (strain RKS4594).